The following is a 292-amino-acid chain: ATP synthase gamma chain (292 aa).

This sequence belongs to the ATPase gamma chain family. In terms of assembly, F-type ATPases have 2 components, CF(1) - the catalytic core - and CF(0) - the membrane proton channel. CF(1) has five subunits: alpha(3), beta(3), gamma(1), delta(1), epsilon(1). CF(0) has three main subunits: a, b and c.

The protein localises to the cell inner membrane. Produces ATP from ADP in the presence of a proton gradient across the membrane. The gamma chain is believed to be important in regulating ATPase activity and the flow of protons through the CF(0) complex. In Chlorobaculum parvum (strain DSM 263 / NCIMB 8327) (Chlorobium vibrioforme subsp. thiosulfatophilum), this protein is ATP synthase gamma chain.